We begin with the raw amino-acid sequence, 292 residues long: uncharacterized protein (292 aa).

Catalysis depends on charge relay system residues Thr43 and Tyr105. Catalysis depends on Tyr131, which acts as the Proton donor. The Schiff-base intermediate with substrate role is filled by Lys159.

Belongs to the DapA family. Homotetramer.

The protein localises to the cytoplasm. This is an uncharacterized protein from Thermococcus kodakarensis (strain ATCC BAA-918 / JCM 12380 / KOD1) (Pyrococcus kodakaraensis (strain KOD1)).